The following is a 279-amino-acid chain: Lactose operon transcription activator (279 aa).

The 99-residue stretch at 174-272 (QHAVDFINTN…EISASEYRHH (99 aa)) folds into the HTH araC/xylS-type domain. DNA-binding regions (H-T-H motif) lie at residues 191-212 (EDVA…KKNL) and 239-262 (ISDI…TKHF).

Functionally, transcriptional regulator of the lacPH genes for lactose utilization. This Staphylococcus xylosus protein is Lactose operon transcription activator (lacR).